A 576-amino-acid polypeptide reads, in one-letter code: Small ribosomal subunit protein mS80 (rPPR6) (576 aa).

A mitochondrion-targeting transit peptide spans 1-76 (MLRSFLCRSQ…SLPADEIPIS (76 aa)). PPR repeat units lie at residues 230–264 (NLEILNELIALFGKLGKSKAAFDVFSKTEEFGFTP), 265–299 (NAKTYYLTLEALCKRSFMDWACSVCEKMLKSGVLS), 300–336 (EGEQMGNIITWFCKEGKAEEAYSVYELAKTKEKSLPP), 341–370 (TLITALCKNDGTITFAQEMLGDLSGEARRR), 371–405 (GIKPFSDVIHSLCRMRNVKDAKALLLDMISKGPAP), 406–440 (GNAVFNLVVHACSKTGDLDEAKEVLKLMESRGLKP), 441–475 (DVYTYTVIISGYAKGGMMDEAQEILAEAKKKHKKL), 476–510 (SPVTYHALIRGYCKIEEYDEALKLLNEMDRFGVQP), and 511–546 (NADEYNKLIQSFCLKALDWEKAEVLFEEMKQKGLHL).

It belongs to the PPR family. P subfamily. Component of the mitochondrial ribosome small subunit.

It is found in the mitochondrion. This chain is Small ribosomal subunit protein mS80 (rPPR6), found in Arabidopsis thaliana (Mouse-ear cress).